Reading from the N-terminus, the 314-residue chain is Serine/threonine-protein phosphatase PP2A-5 catalytic subunit (314 aa).

Mn(2+) is bound by residues Asp-62, His-64, Asp-90, and Asn-122. His-123 functions as the Proton donor in the catalytic mechanism. Residues His-172 and His-246 each contribute to the Mn(2+) site.

Belongs to the PPP phosphatase family. PP-2A subfamily. Mn(2+) serves as cofactor.

The protein localises to the cytoplasm. It catalyses the reaction O-phospho-L-seryl-[protein] + H2O = L-seryl-[protein] + phosphate. The catalysed reaction is O-phospho-L-threonyl-[protein] + H2O = L-threonyl-[protein] + phosphate. This Nicotiana tabacum (Common tobacco) protein is Serine/threonine-protein phosphatase PP2A-5 catalytic subunit (NPP5).